Consider the following 253-residue polypeptide: Sulfate transporter CysZ (253 aa).

The next 4 membrane-spanning stretches (helical) occupy residues 31–51, 75–95, 151–171, and 222–242; these read FVILPLLVNILLMGGAFWWLF, LLWPLAVISVLLVFGYFFSTI, IVLLILYFIPGIGQTVAPVLW, and IPLLNLFIMPVAVCGATAMWV.

The protein belongs to the CysZ family.

Its subcellular location is the cell inner membrane. In terms of biological role, high affinity, high specificity proton-dependent sulfate transporter, which mediates sulfate uptake. Provides the sulfur source for the cysteine synthesis pathway. The sequence is that of Sulfate transporter CysZ from Shigella dysenteriae serotype 1 (strain Sd197).